Here is a 189-residue protein sequence, read N- to C-terminus: Parkinson disease protein 7 (189 aa).

N-acetylalanine is present on Ala-2. Residues Cys-46 and Cys-53 are each lipidated (S-palmitoyl cysteine). Phosphotyrosine is present on Tyr-67. The active-site Nucleophile is the Cys-106. Cys-106 is subject to Cysteine sulfinic acid (-SO2H); alternate. Cys-106 carries the S-palmitoyl cysteine; alternate lipid modification. His-126 is a catalytic residue. Lys-130 participates in a covalent cross-link: Glycyl lysine isopeptide (Lys-Gly) (interchain with G-Cter in SUMO). An N6-acetyllysine modification is found at Lys-148. Residue Lys-182 is modified to N6-succinyllysine.

The protein belongs to the peptidase C56 family. As to quaternary structure, homodimer. Binds EFCAB6/DJBP and PIAS2. Part of a ternary complex containing PARK7, EFCAB6/DJBP and AR. Interacts (via N-terminus) with OTUD7B. Interacts with BBS1, HIPK1, CLCF1 and MTERF. Forms a complex with PINK1 and PRKN. Interacts (via C-terminus) with NCF1; the interaction is enhanced by LPS and modulates NCF1 phosphorylation and membrane translocation. Interacts with NENF. Deglycase activity does not require glutathione as a cofactor, however, glycated glutathione constitutes a PARK7 substrate. serves as cofactor. Sumoylated on Lys-130 by PIAS2 or PIAS4; which is enhanced after ultraviolet irradiation and essential for cell-growth promoting activity and transforming activity. Post-translationally, cys-106 is easily oxidized to sulfinic acid. In terms of processing, undergoes cleavage of a C-terminal peptide and subsequent activation of protease activity in response to oxidative stress. In terms of tissue distribution, highly expressed in pancreas, kidney, skeletal muscle, liver, testis and heart. Detected at slightly lower levels in placenta and brain (at protein level). Detected in astrocytes, Sertoli cells, spermatogonia, spermatids and spermatozoa. Expressed by pancreatic islets at higher levels than surrounding exocrine tissues.

The protein localises to the cell membrane. It is found in the cytoplasm. Its subcellular location is the nucleus. The protein resides in the membrane raft. It localises to the mitochondrion. The protein localises to the endoplasmic reticulum. It catalyses the reaction N(omega)-(1-hydroxy-2-oxopropyl)-L-arginyl-[protein] + H2O = lactate + L-arginyl-[protein] + H(+). The enzyme catalyses N(6)-(1-hydroxy-2-oxopropyl)-L-lysyl-[protein] + H2O = lactate + L-lysyl-[protein] + H(+). The catalysed reaction is S-(1-hydroxy-2-oxopropyl)-L-cysteinyl-[protein] + H2O = lactate + L-cysteinyl-[protein] + H(+). It carries out the reaction N(omega)-(1-hydroxy-2-oxoethyl)-L-arginyl-[protein] + H2O = L-arginyl-[protein] + glycolate + H(+). It catalyses the reaction N(6)-(1-hydroxy-2-oxoethyl)-L-lysyl-[protein] + H2O = glycolate + L-lysyl-[protein] + H(+). The enzyme catalyses S-(1-hydroxy-2-oxoethyl)-L-cysteinyl-[protein] + H2O = glycolate + L-cysteinyl-[protein] + H(+). The catalysed reaction is N(2)-(1-hydroxy-2-oxopropyl)-dGTP + H2O = lactate + dGTP + H(+). It carries out the reaction N(2)-(1-hydroxy-2-oxopropyl)-GTP + H2O = lactate + GTP + H(+). It catalyses the reaction N(2)-(1-hydroxy-2-oxopropyl)-GDP + H2O = lactate + GDP + H(+). The enzyme catalyses N(2)-(1-hydroxy-2-oxopropyl)-GMP + H2O = lactate + GMP + H(+). The catalysed reaction is N(2)-(1-hydroxy-2-oxoethyl)-dGTP + H2O = dGTP + glycolate + H(+). It carries out the reaction N(2)-(1-hydroxy-2-oxoethyl)-GTP + H2O = glycolate + GTP + H(+). It catalyses the reaction N(2)-(1-hydroxy-2-oxoethyl)-GDP + H2O = glycolate + GDP + H(+). The enzyme catalyses N(2)-(1-hydroxy-2-oxoethyl)-GMP + H2O = glycolate + GMP + H(+). The catalysed reaction is an N(2)-(1-hydroxy-2-oxopropyl)-guanosine in RNA + H2O = a guanosine in RNA + lactate + H(+). It carries out the reaction an N(2)-(1-hydroxy-2-oxopropyl)-2'-deoxyguanosine in DNA + H2O = a 2'-deoxyguanosine in DNA + lactate + H(+). It catalyses the reaction an N(2)-(1-hydroxy-2-oxoethyl)-guanosine in RNA + H2O = a guanosine in RNA + glycolate + H(+). The enzyme catalyses an N(2)-(1-hydroxy-2-oxoethyl)-2'-deoxyguanosine in DNA + H2O = a 2'-deoxyguanosine in DNA + glycolate + H(+). Multifunctional protein with controversial molecular function which plays an important role in cell protection against oxidative stress and cell death acting as oxidative stress sensor and redox-sensitive chaperone and protease. It is involved in neuroprotective mechanisms like the stabilization of NFE2L2 and PINK1 proteins, male fertility as a positive regulator of androgen signaling pathway as well as cell growth and transformation through, for instance, the modulation of NF-kappa-B signaling pathway. Has been described as a protein and nucleotide deglycase that catalyzes the deglycation of the Maillard adducts formed between amino groups of proteins or nucleotides and reactive carbonyl groups of glyoxals. But this function is rebuted by other works. As a protein deglycase, repairs methylglyoxal- and glyoxal-glycated proteins, and releases repaired proteins and lactate or glycolate, respectively. Deglycates cysteine, arginine and lysine residues in proteins, and thus reactivates these proteins by reversing glycation by glyoxals. Acts on early glycation intermediates (hemithioacetals and aminocarbinols), preventing the formation of advanced glycation endproducts (AGE) that cause irreversible damage. Also functions as a nucleotide deglycase able to repair glycated guanine in the free nucleotide pool (GTP, GDP, GMP, dGTP) and in DNA and RNA. Is thus involved in a major nucleotide repair system named guanine glycation repair (GG repair), dedicated to reversing methylglyoxal and glyoxal damage via nucleotide sanitization and direct nucleic acid repair. Protects histones from adduction by methylglyoxal, controls the levels of methylglyoxal-derived argininine modifications on chromatin. Able to remove the glycations and restore histone 3, histone glycation disrupts both local and global chromatin architecture by altering histone-DNA interactions as well as histone acetylation and ubiquitination levels. Displays a very low glyoxalase activity that may reflect its deglycase activity. Eliminates hydrogen peroxide and protects cells against hydrogen peroxide-induced cell death. Required for correct mitochondrial morphology and function as well as for autophagy of dysfunctional mitochondria. Plays a role in regulating expression or stability of the mitochondrial uncoupling proteins SLC25A14 and SLC25A27 in dopaminergic neurons of the substantia nigra pars compacta and attenuates the oxidative stress induced by calcium entry into the neurons via L-type channels during pacemaking. Regulates astrocyte inflammatory responses, may modulate lipid rafts-dependent endocytosis in astrocytes and neuronal cells. In pancreatic islets, involved in the maintenance of mitochondrial reactive oxygen species (ROS) levels and glucose homeostasis in an age- and diet dependent manner. Protects pancreatic beta cells from cell death induced by inflammatory and cytotoxic setting. Binds to a number of mRNAs containing multiple copies of GG or CC motifs and partially inhibits their translation but dissociates following oxidative stress. Metal-binding protein able to bind copper as well as toxic mercury ions, enhances the cell protection mechanism against induced metal toxicity. In macrophages, interacts with the NADPH oxidase subunit NCF1 to direct NADPH oxidase-dependent ROS production, and protects against sepsis. The chain is Parkinson disease protein 7 from Homo sapiens (Human).